An 88-amino-acid chain; its full sequence is EMBRYO SURROUNDING FACTOR 1-like protein 3 (88 aa).

An N-terminal signal peptide occupies residues 1 to 22; that stretch reads MKLSQIALICIVIASLFAMHEC. 3 disulfides stabilise this stretch: C41/C56, C54/C80, and C57/C67.

It belongs to the MEG family. In terms of tissue distribution, expressed in stems, leaves and flowers.

This is EMBRYO SURROUNDING FACTOR 1-like protein 3 (ESFL3) from Arabidopsis thaliana (Mouse-ear cress).